Reading from the N-terminus, the 68-residue chain is Large ribosomal subunit protein uL29 (68 aa).

It belongs to the universal ribosomal protein uL29 family.

The protein is Large ribosomal subunit protein uL29 of Limosilactobacillus fermentum (strain NBRC 3956 / LMG 18251) (Lactobacillus fermentum).